Consider the following 505-residue polypeptide: T-cell activation GTPase-activating protein 1 (505 aa).

Disordered stretches follow at residues 81–147 (DDSL…SESS), 160–212 (QQDR…DPFT), 242–293 (QGHI…QREI), 311–339 (RTSS…SQLS), and 414–441 (KPST…HRLS). Residues 90-102 (SDVSTLQNDSAYD) are compositionally biased toward polar residues. Acidic residues predominate over residues 203-212 (EGDEAEDPFT). The span at 250 to 262 (SRSSPGESLGSSP) shows a compositional bias: low complexity. Composition is skewed to basic and acidic residues over residues 283 to 292 (KTDKTKPQRE) and 318 to 336 (EKSK…RKES).

The chain is T-cell activation GTPase-activating protein 1 (Tagap1) from Mus musculus (Mouse).